The chain runs to 175 residues: Replication restart protein PriC (175 aa).

This sequence belongs to the PriC family. Monomer. Oligomerizes in the absence of DNA. Component of the replication restart primosome, which is composed of PriA, PriB, PriC, DnaB and DnaT; DnaG primase associates transiently with this complex. Interacts with the C-terminus of SSB; this interaction is required for DnaB loading onto substrate replication forks. Interacts with DnaB alone and in the DnaB-DnaC complex, probably 1:1 binding with DnaB.

Its function is as follows. Involved in the restart of stalled replication forks, which reloads the replicative helicase (DnaB) on sites other than the origin of replication. Recognizes abandoned replication forks and remodels DNA single-stranded binding protein (SSB) on ssDNA to uncover a loading site for DnaB. There are several restart pathways, the PriA-PriC pathway is a minor restart pathway. Also part of the minor PriC-Rep pathway for restart of stalled replication forks, which has a different substrate specificity than PriA. priB and priC have redundant roles in the cell. Stimulates the 3'-5' helicase activity of Rep helicase in vitro. In vitro can load the DnaB replicative helicase from a DnaB-DnaC complex on an SSB-coated stalled replication fork with no leading- or lagging-strand (or with a gap between the leading strand and fork junction) in the absence of other primosome proteins (PriA, PriB or DnaT). Also part of the major restart pathway with PriA, PriB, DnaB, DnaT and DnaG primase. PriC may contribute to the stability of the preprimosome complex. Preferentially binds approximately 7-9 nucleotides of single-stranded (ss)DNA, also binds double-stranded (ds)DNA. PriB is probably more important in the cell than PriC. This chain is Replication restart protein PriC, found in Escherichia coli (strain K12).